The sequence spans 358 residues: Alanine racemase (358 aa).

Lys-35 acts as the Proton acceptor; specific for D-alanine in catalysis. Lys-35 carries the N6-(pyridoxal phosphate)lysine modification. Arg-130 lines the substrate pocket. Tyr-255 acts as the Proton acceptor; specific for L-alanine in catalysis. Met-303 provides a ligand contact to substrate.

This sequence belongs to the alanine racemase family. Requires pyridoxal 5'-phosphate as cofactor.

The enzyme catalyses L-alanine = D-alanine. Its pathway is amino-acid biosynthesis; D-alanine biosynthesis; D-alanine from L-alanine: step 1/1. In terms of biological role, catalyzes the interconversion of L-alanine and D-alanine. May also act on other amino acids. The polypeptide is Alanine racemase (alr) (Shewanella sp. (strain ANA-3)).